We begin with the raw amino-acid sequence, 240 residues long: Ribosomal RNA large subunit methyltransferase E (240 aa).

The span at 1–20 (MSKAGGNKGGSRTGGRGGAG) shows a compositional bias: gly residues. A disordered region spans residues 1-40 (MSKAGGNKGGSRTGGRGGAGSSNLHVRVKKKAGTTKESSR). Gly92, Trp94, Asp115, Asp131, and Asp155 together coordinate S-adenosyl-L-methionine. The active-site Proton acceptor is Lys195.

Belongs to the class I-like SAM-binding methyltransferase superfamily. RNA methyltransferase RlmE family.

The protein localises to the cytoplasm. The catalysed reaction is uridine(2552) in 23S rRNA + S-adenosyl-L-methionine = 2'-O-methyluridine(2552) in 23S rRNA + S-adenosyl-L-homocysteine + H(+). Functionally, specifically methylates the uridine in position 2552 of 23S rRNA at the 2'-O position of the ribose in the fully assembled 50S ribosomal subunit. In Brucella ovis (strain ATCC 25840 / 63/290 / NCTC 10512), this protein is Ribosomal RNA large subunit methyltransferase E.